The sequence spans 265 residues: Polyphosphate glucokinase (265 aa).

A compositionally biased stretch (polar residues) spans 1 to 18 (MTSTGPETSETPGATTQR). The segment at 1 to 22 (MTSTGPETSETPGATTQRHGFG) is disordered. An ATP-binding site is contributed by 24–29 (DVGGSG).

The protein belongs to the ROK (NagC/XylR) family. In terms of assembly, homodimer.

It catalyses the reaction [phosphate](n) + D-glucose = [phosphate](n-1) + D-glucose 6-phosphate + H(+). The enzyme catalyses D-glucose + ATP = D-glucose 6-phosphate + ADP + H(+). Functionally, catalyzes the phosphorylation of glucose using polyphosphate or ATP as the phosphoryl donor. Polyphosphate, rather than ATP, seems to be the major phosphate donor for the enzyme in M.tuberculosis. The chain is Polyphosphate glucokinase (ppgK) from Mycobacterium tuberculosis (strain CDC 1551 / Oshkosh).